The chain runs to 171 residues: Mitochondrial import inner membrane translocase subunit Tim17-A (171 aa).

Cysteine 9 and cysteine 78 are disulfide-bonded. A run of 3 helical transmembrane segments spans residues 17-37, 63-77, and 113-133; these read CGGA…FKGF, GGSF…STID, and VGSA…GILL. The interval 144 to 171 is disordered; that stretch reads GPQFTEDHSQLPSSQLPSSPFGDYRQYQ. The segment covering 153 to 163 has biased composition (low complexity); it reads QLPSSQLPSSP.

The protein belongs to the Tim17/Tim22/Tim23 family. As to quaternary structure, component of the TIM23 complex at least composed of TIMM23, TIMM17 (TIMM17A or TIMM17B) and TIMM50. The complex interacts with the TIMM44 component of the PAM complex and with DNAJC15. Degraded by YMEL1 downstream of the integrated stress response (ISR).

Its subcellular location is the mitochondrion inner membrane. In terms of biological role, essential component of the TIM23 complex, a complex that mediates the translocation of transit peptide-containing proteins across the mitochondrial inner membrane. This is Mitochondrial import inner membrane translocase subunit Tim17-A (Timm17a) from Mus musculus (Mouse).